Reading from the N-terminus, the 359-residue chain is Phosphoserine aminotransferase (359 aa).

Arg-41 provides a ligand contact to L-glutamate. Residues 75–76 (AS), Trp-101, Thr-152, Asp-171, and Gln-194 contribute to the pyridoxal 5'-phosphate site. Lys-195 carries the N6-(pyridoxal phosphate)lysine modification. Pyridoxal 5'-phosphate is bound at residue 236 to 237 (NT).

The protein belongs to the class-V pyridoxal-phosphate-dependent aminotransferase family. SerC subfamily. Homodimer. Pyridoxal 5'-phosphate is required as a cofactor.

Its subcellular location is the cytoplasm. The catalysed reaction is O-phospho-L-serine + 2-oxoglutarate = 3-phosphooxypyruvate + L-glutamate. It catalyses the reaction 4-(phosphooxy)-L-threonine + 2-oxoglutarate = (R)-3-hydroxy-2-oxo-4-phosphooxybutanoate + L-glutamate. Its pathway is amino-acid biosynthesis; L-serine biosynthesis; L-serine from 3-phospho-D-glycerate: step 2/3. It participates in cofactor biosynthesis; pyridoxine 5'-phosphate biosynthesis; pyridoxine 5'-phosphate from D-erythrose 4-phosphate: step 3/5. Functionally, catalyzes the reversible conversion of 3-phosphohydroxypyruvate to phosphoserine and of 3-hydroxy-2-oxo-4-phosphonooxybutanoate to phosphohydroxythreonine. This chain is Phosphoserine aminotransferase, found in Acinetobacter baylyi (strain ATCC 33305 / BD413 / ADP1).